Consider the following 290-residue polypeptide: 3-deoxy-manno-octulosonate cytidylyltransferase, mitochondrial (290 aa).

The transit peptide at methionine 1–proline 50 directs the protein to the mitochondrion.

Belongs to the KdsB family. Mg(2+) serves as cofactor. Expressed in roots, leaves, stems and siliques.

The protein resides in the mitochondrion outer membrane. The catalysed reaction is 3-deoxy-alpha-D-manno-oct-2-ulosonate + CTP = CMP-3-deoxy-beta-D-manno-octulosonate + diphosphate. It participates in nucleotide-sugar biosynthesis; CMP-3-deoxy-D-manno-octulosonate biosynthesis; CMP-3-deoxy-D-manno-octulosonate from 3-deoxy-D-manno-octulosonate and CTP: step 1/1. Its activity is regulated as follows. Inhibited by 2beta-deoxy-Kdo. Catalyzes the production of the sugar nucleotide CMP-3-deoxy-D-manno-octulosonate (CMP-KDO). CTP is the preferred nucleotide donor, but it can partially be replaced with UTP. Activates KDO during the biosynthesis of rhamnogalacturonan II (RG-II), a structurally complex pectic polysaccharide of the primary cell wall. RG-II is essential for the cell wall integrity of rapidly growing tissues and pollen tube growth and elongation. This is 3-deoxy-manno-octulosonate cytidylyltransferase, mitochondrial from Arabidopsis thaliana (Mouse-ear cress).